We begin with the raw amino-acid sequence, 182 residues long: ATP-dependent protease subunit HslV (182 aa).

The active site involves Thr2. Na(+) contacts are provided by Gly157, Cys160, and Thr163.

This sequence belongs to the peptidase T1B family. HslV subfamily. In terms of assembly, a double ring-shaped homohexamer of HslV is capped on each side by a ring-shaped HslU homohexamer. The assembly of the HslU/HslV complex is dependent on binding of ATP.

The protein resides in the cytoplasm. The catalysed reaction is ATP-dependent cleavage of peptide bonds with broad specificity.. Its activity is regulated as follows. Allosterically activated by HslU binding. Its function is as follows. Protease subunit of a proteasome-like degradation complex believed to be a general protein degrading machinery. This Sodalis glossinidius (strain morsitans) protein is ATP-dependent protease subunit HslV.